A 306-amino-acid chain; its full sequence is MAAIIVHGGAGTIRKEERIPKVIEGVREAVLAGWRELKRGSALDAVEEAVKALEDNPIFNAGTGSVLTLDGKVEMDAAIMRGKTLDAGAVAGIWGVKNPISVARKVMEKTDHVLLIGEGAVKFARLLGFEEYDPITEERLKQWEELRKKLIEKGETKHWKKLNELIKEYPEVLRSTVGAVAFDGEEVVAGTSTGGVFLKMFGRVGDTPIIGGGTYANEVAGASCTGLGEVAIKLALAKSAADFVRLGMDAQTASEAAISLATKYFGPDTMGIIMVDAKGNVGFAKNTKHMSYAFMKDGMDEPEAGV.

Catalysis depends on T176, which acts as the Nucleophile. Residues 203-206 (RVGD) and 225-228 (TGLG) contribute to the substrate site.

Belongs to the Ntn-hydrolase family. In terms of assembly, heterotetramer of two alpha and two beta chains arranged as a dimer of alpha/beta heterodimers. The uncleaved protein forms homodimers. Post-translationally, autocleaved. Generates the alpha and beta subunits. The N-terminal residue of the beta subunit is thought to be responsible for the nucleophile hydrolase activity. Predominantly produced in the uncleaved form when gene expression is induced at 37 degrees Celsius with 0.5 mM IPTG. When produced at 42 degrees Celsius without adding IPTG, approximately 90% of the protein is found in the cleaved form, while the remaining 10% is observed as uncleaved precursor. Undergoes complete auto-cleavage within 24 hours at 37 degrees Celsius.

The catalysed reaction is L-asparagine + H2O = L-aspartate + NH4(+). With respect to regulation, undergoes auto-cleavage in a temperature-dependent and glycine-independent manner. Metal ions and EDTA do not have any significant effect on enzyme activity, indicating that activity is metal-independent. Functionally, catalyzes the hydrolysis of L-asparagine into L-aspartate and ammonia. Also displays D-asparaginase activity, which is about 10% of the L-asparaginase activity. Does not exhibit glutaminase activity. The polypeptide is Plant-type L-asparaginase (Thermococcus kodakarensis (strain ATCC BAA-918 / JCM 12380 / KOD1) (Pyrococcus kodakaraensis (strain KOD1))).